A 160-amino-acid polypeptide reads, in one-letter code: Large ribosomal subunit protein uL10 (160 aa).

This sequence belongs to the universal ribosomal protein uL10 family. As to quaternary structure, part of the ribosomal stalk of the 50S ribosomal subunit. The N-terminus interacts with L11 and the large rRNA to form the base of the stalk. The C-terminus forms an elongated spine to which L12 dimers bind in a sequential fashion forming a multimeric L10(L12)X complex.

Forms part of the ribosomal stalk, playing a central role in the interaction of the ribosome with GTP-bound translation factors. This chain is Large ribosomal subunit protein uL10, found in Ehrlichia canis (strain Jake).